We begin with the raw amino-acid sequence, 254 residues long: Countin-2 (254 aa).

An N-terminal signal peptide occupies residues 1–19 (MMIKYITIAILFIASLVKA). Residues 22–107 (QFSLCPTCVD…EELTVCPKNQ (86 aa)) form the Saposin B-type domain. Intrachain disulfides connect cysteine 26-cysteine 103, cysteine 29-cysteine 97, and cysteine 56-cysteine 68. N-linked (GlcNAc...) asparagine glycosylation is found at asparagine 110 and asparagine 219. The interval 231–254 (QMTGTGSGSGSGSGSSSGAAYLRY) is disordered. The span at 233-245 (TGTGSGSGSGSGS) shows a compositional bias: gly residues.

Belongs to the countin family.

Its subcellular location is the secreted. Cell-counting factor that limits the minimum size of the multicellular structure. May up-regulate the expression of both gp24 and gp80, which mediate cell adhesion. The protein is Countin-2 (ctnB) of Dictyostelium discoideum (Social amoeba).